The chain runs to 54 residues: Large ribosomal subunit protein bL33 (54 aa).

Belongs to the bacterial ribosomal protein bL33 family.

The protein is Large ribosomal subunit protein bL33 of Petrotoga mobilis (strain DSM 10674 / SJ95).